The sequence spans 475 residues: MALNACTKLPVARLIRPSASYHPAISSIRYYSAPPESTIPAAKLKYIPTSGTYPKGFLVSGTHVGVKPTNKSTPDLAFLASETPCAAAAVFTKNKFQAAPVTVSRKMLQRRSNTGIRSVIINSGCANAVTGKGGMEDAEKMGAEADRCFDTPSDGKGGSSIVMSTGVIGQRLPIQKILLKIPTAFDGLGSSHEHWLATATAICTTDTFPKLLSRTFSLPSSPEVEYRMAGMTKGAGMIHPNMATLLGMIATDAPIAPTLLPSLLTKAVNKSFNSISIDGDTSTNDTVAVLANGAAGGKEVTSESSEDHAAFQKVLTEFATDLAKLVVRDGEGATKFVTIRVTEAPSEIGARKIASTIARSPLVKTALYGKDANWGRILCATGYSQISEPGQPINEVPEIIPEKTSVSFIPSDGSPELKLLVNGEPESVDEARAAEILEHEDLEILIKLGGGKEEAVYWTCDFSHEYVTINGDYRT.

Positions 204, 233, 244, 331, 470, and 475 each coordinate substrate. Thr-244 (nucleophile) is an active-site residue.

It belongs to the ArgJ family. In terms of assembly, heterodimer of an alpha and a beta chain. Post-translationally, the alpha and beta chains are autoproteolytically processed from a single precursor protein within the mitochondrion.

It localises to the mitochondrion matrix. The enzyme catalyses N(2)-acetyl-L-ornithine + L-glutamate = N-acetyl-L-glutamate + L-ornithine. It carries out the reaction L-glutamate + acetyl-CoA = N-acetyl-L-glutamate + CoA + H(+). Its pathway is amino-acid biosynthesis; L-arginine biosynthesis; L-ornithine and N-acetyl-L-glutamate from L-glutamate and N(2)-acetyl-L-ornithine (cyclic): step 1/1. The protein operates within amino-acid biosynthesis; L-arginine biosynthesis; N(2)-acetyl-L-ornithine from L-glutamate: step 1/4. Functionally, catalyzes two activities which are involved in the cyclic version of arginine biosynthesis: the synthesis of acetylglutamate from glutamate and acetyl-CoA, and of ornithine by transacetylation between acetylornithine and glutamate. The sequence is that of Arginine biosynthesis bifunctional protein ArgJ 1, mitochondrial from Botryotinia fuckeliana (strain B05.10) (Noble rot fungus).